We begin with the raw amino-acid sequence, 348 residues long: sn-glycerol-3-phosphate import ATP-binding protein UgpC 3 (348 aa).

The ABC transporter domain occupies 4–234; the sequence is INIIDVKKNY…PASLFVASFI (231 aa). 36–43 lines the ATP pocket; it reads GPSGCGKS.

Belongs to the ABC transporter superfamily. sn-glycerol-3-phosphate importer (TC 3.A.1.1.3) family. As to quaternary structure, the complex is composed of two ATP-binding proteins (UgpC), two transmembrane proteins (UgpA and UgpE) and a solute-binding protein (UgpB).

The protein localises to the cell inner membrane. It catalyses the reaction sn-glycerol 3-phosphate(out) + ATP + H2O = sn-glycerol 3-phosphate(in) + ADP + phosphate + H(+). Its function is as follows. Part of the ABC transporter complex UgpBAEC involved in sn-glycerol-3-phosphate (G3P) import. Responsible for energy coupling to the transport system. The polypeptide is sn-glycerol-3-phosphate import ATP-binding protein UgpC 3 (Rhizobium johnstonii (strain DSM 114642 / LMG 32736 / 3841) (Rhizobium leguminosarum bv. viciae)).